The following is a 387-amino-acid chain: BTB and MATH domain-containing protein 38 (387 aa).

Positions 79-204 (EGMLKLEIPN…NEMVTVTARV (126 aa)) constitute an MATH domain. In terms of domain architecture, BTB spans 228–295 (CDMTLVINKQ…IYPCHKPITS (68 aa)).

In Caenorhabditis elegans, this protein is BTB and MATH domain-containing protein 38 (bath-38).